A 268-amino-acid polypeptide reads, in one-letter code: Early nodulin-20 (268 aa).

A signal peptide spans 1 to 24 (MSSSSPILLMFIFSIWMLISYSES). The region spanning 25–129 (TDYLVGDSEN…GLKLAVVVMV (105 aa)) is the Phytocyanin domain. Asparagine 67 carries N-linked (GlcNAc...) asparagine glycosylation. A disulfide bond links cysteine 83 and cysteine 117. Composition is skewed to pro residues over residues 134–145 (SSPPPPPSPPTP) and 160–185 (PSPPSPSPSPSPSPSPSPSPRSTPIP). Residues 134 to 253 (SSPPPPPSPP…SGSKGGGAGH (120 aa)) form a disordered region. Over residues 199–235 (PSLSKSPSPSESPSLAPSPSDSVASLAPSSSPSDESP) the composition is skewed to low complexity. Serine 243 is lipidated: GPI-anchor amidated serine. Residues 244–268 (SGSKGGGAGHGFLEVSIAMMMFLIF) constitute a propeptide, removed in mature form.

The protein belongs to the early nodulin-like (ENODL) family.

It localises to the cell membrane. In terms of biological role, may act as a carbohydrate transporter. This Medicago truncatula (Barrel medic) protein is Early nodulin-20.